Consider the following 1644-residue polypeptide: Kinesin-like protein unc-104 (1644 aa).

A Kinesin motor domain is found at 3 to 351; sequence SVKVAVRVRP…LRYADRAKQI (349 aa). 97–104 contributes to the ATP binding site; sequence GQTGAGKS. Positions 358-436 form a coiled coil; the sequence is NEDANAKLIR…IAELNETWEE (79 aa). An FHA domain is found at 499–565; that stretch reads TRLGTSEANV…LQTGSRVILG (67 aa). Over residues 574 to 591 the composition is skewed to basic and acidic residues; sequence HPEQAREKREKPKDKDVG. The segment at 574–598 is disordered; sequence HPEQAREKREKPKDKDVGENPGGNA. Positions 631 to 672 form a coiled coil; sequence EQFKREKLAADQEFEEQRKTYEARIDALQKQVEEQSMTMSMY. Disordered regions lie at residues 953–985 and 1419–1440; these read EQED…LQPG and HMVI…TLPE. A compositionally biased stretch (basic and acidic residues) spans 969-984; it reads ELHESNEHEPGEHLQP. A compositionally biased stretch (polar residues) spans 1428–1437; it reads TPVKDQQTPT. Residues 1542–1640 form the PH domain; it reads VVARKGYLNV…WLYAINPLLA (99 aa).

Belongs to the TRAFAC class myosin-kinesin ATPase superfamily. Kinesin family. Unc-104 subfamily. As to quaternary structure, monomer.

Its subcellular location is the cytoplasm. The protein resides in the cytoskeleton. Required for presynaptic maturation, has a role in axonal transport of dense-core vesicles carrying synaptic vesicle precursors, components required for the morphological transformation of axonal growth cones to mature boutons. This chain is Kinesin-like protein unc-104, found in Aedes aegypti (Yellowfever mosquito).